A 622-amino-acid chain; its full sequence is Signal recognition particle subunit SRP68 (622 aa).

The interval Arg576–Lys622 is disordered. The segment covering Lys585–Lys595 has biased composition (low complexity).

This sequence belongs to the SRP68 family. Heterodimer with srpa-72. Srpa-68/srpa-72 heterodimer formation is stabilized by the presence of 7SL RNA. Component of a signal recognition particle (SRP) complex that consists of a 7SL RNA molecule of 300 nucleotides and six protein subunits: srpa-72, srpa-68, SRP54, F37F2.2/SRP19, F25G6.8/SRP14 and ZK512.4/SRP9. Within the SRP complex, interacts (via C-terminus) with srpa-72 (via N-terminus).

The protein localises to the cytoplasm. It localises to the nucleus. The protein resides in the nucleolus. It is found in the endoplasmic reticulum. Its function is as follows. Component of the signal recognition particle (SRP) complex, a ribonucleoprotein complex that mediates the cotranslational targeting of secretory and membrane proteins to the endoplasmic reticulum (ER). The SRP complex interacts with the signal sequence in nascent secretory and membrane proteins and directs them to the membrane of the ER. The SRP complex targets the ribosome-nascent chain complex to the SRP receptor (SR), which is anchored in the ER, where SR compaction and GTPase rearrangement drive cotranslational protein translocation into the ER. Binds the signal recognition particle RNA (7SL RNA), srpa-72 binds to this complex subsequently. The SRP complex possibly participates in the elongation arrest function. This is Signal recognition particle subunit SRP68 from Caenorhabditis elegans.